We begin with the raw amino-acid sequence, 267 residues long: Large ribosomal subunit protein uL4 (267 aa).

This sequence belongs to the universal ribosomal protein uL4 family. In terms of assembly, part of the 50S ribosomal subunit.

Functionally, one of the primary rRNA binding proteins, this protein initially binds near the 5'-end of the 23S rRNA. It is important during the early stages of 50S assembly. It makes multiple contacts with different domains of the 23S rRNA in the assembled 50S subunit and ribosome. In terms of biological role, forms part of the polypeptide exit tunnel. The polypeptide is Large ribosomal subunit protein uL4 (Saccharolobus solfataricus (strain ATCC 35092 / DSM 1617 / JCM 11322 / P2) (Sulfolobus solfataricus)).